The primary structure comprises 59 residues: MDHRLLEIIACPVCNGKLSYDKENFELICKLDRLAFPVRDGIPVLLEHEARELPLDEEK.

The protein belongs to the UPF0434 family.

This Photorhabdus laumondii subsp. laumondii (strain DSM 15139 / CIP 105565 / TT01) (Photorhabdus luminescens subsp. laumondii) protein is UPF0434 protein plu1633.